Reading from the N-terminus, the 306-residue chain is Agmatinase (306 aa).

6 residues coordinate Mn(2+): His126, Asp149, His151, Asp153, Asp230, and Asp232.

The protein belongs to the arginase family. Agmatinase subfamily. Mn(2+) serves as cofactor.

The catalysed reaction is agmatine + H2O = urea + putrescine. It functions in the pathway amine and polyamine biosynthesis; putrescine biosynthesis via agmatine pathway; putrescine from agmatine: step 1/1. In terms of biological role, catalyzes the formation of putrescine from agmatine. This Enterobacter sp. (strain 638) protein is Agmatinase.